Consider the following 407-residue polypeptide: MKPTVWHHLRLCPHGHPDETIDDAAIAVDETGTIVWLGAMSALPHGYAHWQREDLHGAWVTPGLVDCHTHLVYGGTRADEFAQRLAGVSYEEIARQGGGIVSTVRATRAADETTLFVQAAARLQPLLAEGVTAIEIKSGYGLDLASERKMLRVARQLGERFPVTVYTTFLGAHALPPEYAGRADAYIDEVCDRMLPALADEGLVDAVDVFCERIGFSLAQTERVFEAATRRGLPVKLHAEQLSNAGGTALAARYRALSADHLEFLDEAGIEAMKAAGTVAVLLPGAYYFIRETQLPPIELLRKHGVPIALATDHNPGTSPLESLLLTLNMGCTLFRMTVPEVLQGVTRHAAAALGRADRHGALEVGRQADFAAWSVGSLAELAYWIGRPLCEQVVRGGTTVFRRMNG.

Fe(3+)-binding residues include His68 and His70. 2 residues coordinate Zn(2+): His68 and His70. Arg77, Tyr140, and His173 together coordinate 4-imidazolone-5-propanoate. Tyr140 contributes to the N-formimidoyl-L-glutamate binding site. Residue His238 participates in Fe(3+) binding. His238 is a Zn(2+) binding site. Position 241 (Gln241) interacts with 4-imidazolone-5-propanoate. Position 313 (Asp313) interacts with Fe(3+). Asp313 provides a ligand contact to Zn(2+). 2 residues coordinate N-formimidoyl-L-glutamate: Asn315 and Gly317. Thr318 contributes to the 4-imidazolone-5-propanoate binding site.

It belongs to the metallo-dependent hydrolases superfamily. HutI family. The cofactor is Zn(2+). It depends on Fe(3+) as a cofactor.

Its subcellular location is the cytoplasm. The enzyme catalyses 4-imidazolone-5-propanoate + H2O = N-formimidoyl-L-glutamate. The protein operates within amino-acid degradation; L-histidine degradation into L-glutamate; N-formimidoyl-L-glutamate from L-histidine: step 3/3. Functionally, catalyzes the hydrolytic cleavage of the carbon-nitrogen bond in imidazolone-5-propanoate to yield N-formimidoyl-L-glutamate. It is the third step in the universal histidine degradation pathway. The chain is Imidazolonepropionase from Burkholderia lata (strain ATCC 17760 / DSM 23089 / LMG 22485 / NCIMB 9086 / R18194 / 383).